The sequence spans 351 residues: Cobalt-precorrin-5B C(1)-methyltransferase (351 aa).

Belongs to the CbiD family.

It carries out the reaction Co-precorrin-5B + S-adenosyl-L-methionine = Co-precorrin-6A + S-adenosyl-L-homocysteine. It functions in the pathway cofactor biosynthesis; adenosylcobalamin biosynthesis; cob(II)yrinate a,c-diamide from sirohydrochlorin (anaerobic route): step 6/10. Catalyzes the methylation of C-1 in cobalt-precorrin-5B to form cobalt-precorrin-6A. This Thermosipho africanus (strain TCF52B) protein is Cobalt-precorrin-5B C(1)-methyltransferase.